The sequence spans 238 residues: Ubiquinone biosynthesis O-methyltransferase (238 aa).

S-adenosyl-L-methionine contacts are provided by arginine 38, glycine 57, aspartate 78, and leucine 124.

It belongs to the methyltransferase superfamily. UbiG/COQ3 family.

It carries out the reaction a 3-demethylubiquinol + S-adenosyl-L-methionine = a ubiquinol + S-adenosyl-L-homocysteine + H(+). The catalysed reaction is a 3-(all-trans-polyprenyl)benzene-1,2-diol + S-adenosyl-L-methionine = a 2-methoxy-6-(all-trans-polyprenyl)phenol + S-adenosyl-L-homocysteine + H(+). Its pathway is cofactor biosynthesis; ubiquinone biosynthesis. Its function is as follows. O-methyltransferase that catalyzes the 2 O-methylation steps in the ubiquinone biosynthetic pathway. The chain is Ubiquinone biosynthesis O-methyltransferase from Marinobacter nauticus (strain ATCC 700491 / DSM 11845 / VT8) (Marinobacter aquaeolei).